The primary structure comprises 224 residues: 7-cyano-7-deazaguanine synthase (224 aa).

9–19 (ISGGMDSTLCA) contacts ATP. Cys190, Cys198, Cys201, and Cys204 together coordinate Zn(2+).

The protein belongs to the QueC family. Zn(2+) serves as cofactor.

It carries out the reaction 7-carboxy-7-deazaguanine + NH4(+) + ATP = 7-cyano-7-deazaguanine + ADP + phosphate + H2O + H(+). It participates in purine metabolism; 7-cyano-7-deazaguanine biosynthesis. Its function is as follows. Catalyzes the ATP-dependent conversion of 7-carboxy-7-deazaguanine (CDG) to 7-cyano-7-deazaguanine (preQ(0)). The polypeptide is 7-cyano-7-deazaguanine synthase (Campylobacter jejuni subsp. jejuni serotype O:6 (strain 81116 / NCTC 11828)).